The primary structure comprises 496 residues: MDKKMRILCEVCLGDKNIDKLINEIRSNIRLKEASVPKCRSMITNIMEKNLEKLSRPPRSREEIEKLYFYLNTQCVNNIIEIIAKKYPNLHVNKKKNACKEQMKRDLDTWGNRRNHVLDRPFIKPRRENSDDEDEQQDGPKNSDFGFMGHTSDSQYASPFENHSITNLPIGQKQPFNNPHQSNRNTSDFESRLQQYMNERDYDLPRNQPPPEIDFTLDHSGEKVMKEKLMRKMGAQSGMNGMDDMGGVCGFNGMSGMNGVGGMDDFYASILGQGSPMAQEGSLGSLNPMNLMTPINRNNQMNPMNQMNPMNQMNPMNQMNPMNQMNPMNQMNPMNQMNPMNPMNMGNQNNQNGIPFMGMGNPLMSVSSTNLMNDQMGYGGFGQSEKNIQFQNDLEKKLAERKIMDLETGQRPEQSAYNDMQSHQMMGSLGSMMNPMGQMNQMGQMNQMGQMGQMNQMDPMNIMNPMNLMNQMNQINSMNQMPMNQMYCNMPNTINC.

Residues 118–129 (LDRPFIKPRREN) are compositionally biased toward basic and acidic residues. A disordered region spans residues 118-187 (LDRPFIKPRR…NPHQSNRNTS (70 aa)). The span at 151–187 (TSDSQYASPFENHSITNLPIGQKQPFNNPHQSNRNTS) shows a compositional bias: polar residues.

This is an uncharacterized protein from Acanthamoeba polyphaga mimivirus (APMV).